A 406-amino-acid polypeptide reads, in one-letter code: Corticosteroid-binding globulin (406 aa).

The signal sequence occupies residues 1–22 (MPLLLYTCLLWLLSSGLWTVQA). 2 N-linked (GlcNAc...) asparagine glycosylation sites follow: N31 and N96. Q255 is a binding site for cortisol. A glycan (N-linked (GlcNAc...) asparagine) is linked at N261. Residue D287 participates in cortisol binding. N-linked (GlcNAc...) asparagine glycans are attached at residues N331 and N360. W394 is a cortisol binding site.

The protein belongs to the serpin family. As to expression, expressed by the liver; secreted in plasma.

The protein localises to the secreted. Its function is as follows. Major transport protein for glucocorticoids and progestins in the blood of almost all vertebrate species. This chain is Corticosteroid-binding globulin (SERPINA6), found in Saimiri sciureus (Common squirrel monkey).